Consider the following 614-residue polypeptide: Sodium- and chloride-dependent betaine transporter (614 aa).

The interval 1 to 33 is disordered; sequence MDRKVAVPEDGPPVVSWLPEEGEKLDQEGEDQV. The Cytoplasmic segment spans residues 1–44; that stretch reads MDRKVAVPEDGPPVVSWLPEEGEKLDQEGEDQVKDRGQWTNKME. Residues 21-33 are compositionally biased toward basic and acidic residues; that stretch reads EGEKLDQEGEDQV. The next 3 helical transmembrane spans lie at 45 to 65, 73 to 92, and 117 to 137; these read FVLS…FPYL, AFFI…VFFL, and GIGL…IIIL. Residues 138–210 are Extracellular-facing; that stretch reads AWALFYLFSS…SGIHDLGALR (73 aa). Residues Cys157 and Cys166 are joined by a disulfide bond. N-linked (GlcNAc...) asparagine glycans are attached at residues Asn171 and Asn183. Helical transmembrane passes span 211-229, 238-255, 291-308, 320-341, 374-393, 423-441, 458-478, 499-518, and 538-556; these read WELA…FCIW, VVYF…ILLI, IFFS…LGSY, IALC…FSIL, MPLS…FLGL, LLIL…FLVT, GICL…VYGA, ISWL…FSLS, and IGWF…FVII. The Cytoplasmic portion of the chain corresponds to 557 to 614; sequence TLLKTRGSFKKRLRQLTTPDPSLPQPKQHLYLDGGTSQDCGPSPTKEGLIVGEKETHL. The tract at residues 591–614 is disordered; that stretch reads GTSQDCGPSPTKEGLIVGEKETHL.

This sequence belongs to the sodium:neurotransmitter symporter (SNF) (TC 2.A.22) family. SLC6A12 subfamily. In terms of assembly, interacts with LIN7C. Kidney.

Its subcellular location is the basolateral cell membrane. It is found in the cell membrane. It carries out the reaction 4-aminobutanoate(out) + chloride(out) + 3 Na(+)(out) = 4-aminobutanoate(in) + chloride(in) + 3 Na(+)(in). It catalyses the reaction glycine betaine(out) + 2 chloride(out) + 3 Na(+)(out) = glycine betaine(in) + 2 chloride(in) + 3 Na(+)(in). Functionally, transporter that mediates cellular uptake of betaine and GABA in a sodium- and chloride-dependent process. May have a role in regulation of GABAergic transmission in the brain through the reuptake of GABA into presynaptic terminals, as well as in osmotic regulation. Probably also involved in renal and hepatic osmotic regulation. The polypeptide is Sodium- and chloride-dependent betaine transporter (SLC6A12) (Canis lupus familiaris (Dog)).